We begin with the raw amino-acid sequence, 417 residues long: Serine hydroxymethyltransferase (417 aa).

Residues Leu121 and 125 to 127 (GHL) contribute to the (6S)-5,6,7,8-tetrahydrofolate site. Position 229 is an N6-(pyridoxal phosphate)lysine (Lys229). 355 to 357 (SPF) contacts (6S)-5,6,7,8-tetrahydrofolate.

This sequence belongs to the SHMT family. Homodimer. Pyridoxal 5'-phosphate is required as a cofactor.

The protein resides in the cytoplasm. The catalysed reaction is (6R)-5,10-methylene-5,6,7,8-tetrahydrofolate + glycine + H2O = (6S)-5,6,7,8-tetrahydrofolate + L-serine. The protein operates within one-carbon metabolism; tetrahydrofolate interconversion. It functions in the pathway amino-acid biosynthesis; glycine biosynthesis; glycine from L-serine: step 1/1. Its function is as follows. Catalyzes the reversible interconversion of serine and glycine with tetrahydrofolate (THF) serving as the one-carbon carrier. This reaction serves as the major source of one-carbon groups required for the biosynthesis of purines, thymidylate, methionine, and other important biomolecules. Also exhibits THF-independent aldolase activity toward beta-hydroxyamino acids, producing glycine and aldehydes, via a retro-aldol mechanism. This chain is Serine hydroxymethyltransferase, found in Shewanella baltica (strain OS155 / ATCC BAA-1091).